Here is a 226-residue protein sequence, read N- to C-terminus: Lysosomal-associated transmembrane protein 4B (226 aa).

4 helical membrane passes run 26–46 (ILLG…LLSA), 72–92 (MCIA…ATYG), 100–120 (WIIP…LVAV), and 153–173 (CLVL…GYLI). Positions 205–221 (PPYDDATVNSATKEPPP) are required for NEDD4 interaction.

The protein belongs to the LAPTM4/LAPTM5 transporter family. In terms of assembly, homooligomer; upon reaching the lysosomes. Interacts with MCOLN1. Interacts with NEDD4; may play a role in the lysosomal sorting of LAPTM4B; enhances HGS association with NEDD4; mediates inhibition of EGFR degradation. Interacts with PIP5K1C; promotes SNX5 association with LAPTM4B; kinase activity of PIP5K1C is required; interaction is regulated by phosphatidylinositol 4,5-bisphosphate generated by PIP5K1C. Interacts with HGS; promotes HGS ubiquitination. Interacts with SNX5. Interacts with SLC3A2 and SLC7A5; recruits SLC3A2 and SLC7A5 to lysosomes to promote leucine uptake into these organelles and is required for mTORC1 activation. Interacts with LRRC32; decreases TGFB1 production in regulatory T cells. Interacts with BECN1; competes with EGFR for LAPTM4B binding; regulates EGFR activity. Interacts with EGFR; positively correlates with EGFR activation. Undergoes proteolytic cleavage following delivery to the lysosomes. In terms of processing, ubiquitinated by NEDD4. As to expression, strongly expressed in fetal ovary, testis, adrenal gland, liver and uterus, and weakly expressed in the spleen.

The protein resides in the endomembrane system. The protein localises to the late endosome membrane. It is found in the cell membrane. Its subcellular location is the cell projection. It localises to the lysosome membrane. The protein resides in the endosome membrane. The protein localises to the endosome. It is found in the multivesicular body membrane. Its subcellular location is the multivesicular body lumen. Its function is as follows. Required for optimal lysosomal function. Blocks EGF-stimulated EGFR intraluminal sorting and degradation. Conversely by binding with the phosphatidylinositol 4,5-bisphosphate, regulates its PIP5K1C interaction, inhibits HGS ubiquitination and relieves LAPTM4B inhibition of EGFR degradation. Recruits SLC3A2 and SLC7A5 (the Leu transporter) to the lysosome, promoting entry of leucine and other essential amino acid (EAA) into the lysosome, stimulating activation of proton-transporting vacuolar (V)-ATPase protein pump (V-ATPase) and hence mTORC1 activation. Plays a role as negative regulator of TGFB1 production in regulatory T cells. Binds ceramide and facilitates its exit from late endosome in order to control cell death pathways. The sequence is that of Lysosomal-associated transmembrane protein 4B from Bos taurus (Bovine).